Here is a 397-residue protein sequence, read N- to C-terminus: Na(+)/H(+) antiporter NhaA (397 aa).

12 consecutive transmembrane segments (helical) span residues 14–34 (ASGI…NTPL), 36–56 (DLYF…FSIY), 59–79 (LLMW…GLEV), 95–115 (IFPA…FTLI), 125–145 (GWAI…GLLG), 154–174 (IFLL…IAIF), 177–197 (HELS…LIIM), 204–224 (AICA…KSGV), 254–274 (LLAP…NAGV), 292–312 (VALG…FLAV), 328–348 (IFAV…LAGL), and 365–385 (LGIL…LKLC).

This sequence belongs to the NhaA Na(+)/H(+) (TC 2.A.33) antiporter family.

It localises to the cell inner membrane. The enzyme catalyses Na(+)(in) + 2 H(+)(out) = Na(+)(out) + 2 H(+)(in). Functionally, na(+)/H(+) antiporter that extrudes sodium in exchange for external protons. This Glaesserella parasuis serovar 5 (strain SH0165) (Haemophilus parasuis) protein is Na(+)/H(+) antiporter NhaA.